The primary structure comprises 144 residues: Maximins 3/H9 type 2 (144 aa).

The signal sequence occupies residues 1–18; the sequence is MNFKYIVAVSFLIASAYA. Propeptides lie at residues 19–43 and 74–123; these read RSVQ…REIR and TAEE…KEKR. The residue at position 143 (Ile-143) is an Isoleucine amide.

This sequence belongs to the bombinin family. In terms of tissue distribution, expressed by the skin glands.

The protein resides in the secreted. Its function is as follows. Maximin-3 shows antibacterial activity against both Gram-positive and Gram-negative bacteria. It also shows antimicrobial activity against the fungus C.albicans, but not against A.flavus nor P.uticale. It has little hemolytic activity. It possess a significant cytotoxicity against tumor cell lines. It possess a significant anti-HIV activity. It shows high spermicidal activity. Maximin-H9 shows antimicrobial activity against bacteria and against the fungus C.albicans. Shows strong hemolytic activity. The chain is Maximins 3/H9 type 2 from Bombina maxima (Giant fire-bellied toad).